We begin with the raw amino-acid sequence, 545 residues long: CTP synthase (545 aa).

The tract at residues 1–266 (MTHFIFVTGG…DDLICERFGF (266 aa)) is amidoligase domain. Position 13 (Ser-13) interacts with CTP. Ser-13 contacts UTP. ATP-binding positions include 14–19 (SLGKGI) and Asp-71. Asp-71 and Glu-140 together coordinate Mg(2+). CTP contacts are provided by residues 147–149 (DIE), 187–192 (KTKPTQ), and Lys-223. Residues 187–192 (KTKPTQ) and Lys-223 contribute to the UTP site. 239–241 (KDA) provides a ligand contact to ATP. The region spanning 292–543 (RVAMVGKYVE…IDAAKTQHQK (252 aa)) is the Glutamine amidotransferase type-1 domain. Gly-353 contributes to the L-glutamine binding site. The Nucleophile; for glutamine hydrolysis role is filled by Cys-380. L-glutamine contacts are provided by residues 381 to 384 (LGMQ), Glu-404, and Arg-471. Catalysis depends on residues His-516 and Glu-518.

Belongs to the CTP synthase family. As to quaternary structure, homotetramer.

It catalyses the reaction UTP + L-glutamine + ATP + H2O = CTP + L-glutamate + ADP + phosphate + 2 H(+). The enzyme catalyses L-glutamine + H2O = L-glutamate + NH4(+). It carries out the reaction UTP + NH4(+) + ATP = CTP + ADP + phosphate + 2 H(+). It functions in the pathway pyrimidine metabolism; CTP biosynthesis via de novo pathway; CTP from UDP: step 2/2. Its activity is regulated as follows. Allosterically activated by GTP, when glutamine is the substrate; GTP has no effect on the reaction when ammonia is the substrate. The allosteric effector GTP functions by stabilizing the protein conformation that binds the tetrahedral intermediate(s) formed during glutamine hydrolysis. Inhibited by the product CTP, via allosteric rather than competitive inhibition. In terms of biological role, catalyzes the ATP-dependent amination of UTP to CTP with either L-glutamine or ammonia as the source of nitrogen. Regulates intracellular CTP levels through interactions with the four ribonucleotide triphosphates. In Acinetobacter baumannii (strain AB307-0294), this protein is CTP synthase.